We begin with the raw amino-acid sequence, 168 residues long: Cofilin-1-A (168 aa).

N-acetylalanine is present on A2. An ADF-H domain is found at 4 to 153; sequence GVMVSDDVIK…NDPCNLADKL (150 aa). The Nuclear localization signal signature appears at 30 to 34; sequence KKRKK.

This sequence belongs to the actin-binding proteins ADF family. In terms of processing, inactive when phosphorylated. Phosphorylation levels vary during development. Oocytes contain only the phosphorylated form, and 80-95% of cfl1 protein is phosphorylated in unfertilized eggs. Rapid dephosphorylation occurs within 30 minutes after fertilization. Phosphorylation levels increase again between the morula and blastula stages (5-8 hpf) and then decrease again as gastrulation approaches. Dephosphorylated by pdxp. As to expression, expressed diffusely in both animal and vegetal hemispheres of the oocyte. During cleavage, expression accumulates around the cleavage furrow, along the vegetal membrane, and later in the midbody. Strongly expressed in the animal hemisphere during blastula stages, with most cells showing expression by gastrulation. By stage 17, expression is highest in cells of the developing neuroectoderm, and at stage 24 the notochord, neural tube, neural crest, somites and some cells of the archenteron show high expression. By stage 35, expression has declined in the notochord, but remains in the neural tube, epidermis and a layer of cells in the archenteron. Also highly expressed in the retina and neuronal cell bodies at the base of the cement gland but not the cement gland itself. At stage 38, expression is widespread, being highest in the nervous system and retina. In the adult, expression is high in the brain, heart, oocyte, stomach, and low in skeletal muscle.

The protein resides in the nucleus matrix. The protein localises to the cytoplasm. It is found in the cytoskeleton. It localises to the cell cortex. Its subcellular location is the membrane. Functionally, may play a role in the regulation of cell morphology and cytoskeletal organization. Binds to F-actin and exhibits pH-sensitive F-actin depolymerizing activity. Required for formation of the cleavage furrow during cytokinesis. The sequence is that of Cofilin-1-A (cfl1-a) from Xenopus laevis (African clawed frog).